The following is a 305-amino-acid chain: Translation initiation factor eIF2B subunit alpha (305 aa).

The protein belongs to the eIF-2B alpha/beta/delta subunits family. Component of the translation initiation factor 2B (eIF2B) complex which is a heterodecamer of two sets of five different subunits: alpha, beta, gamma, delta and epsilon. Subunits alpha, beta and delta comprise a regulatory subcomplex and subunits epsilon and gamma comprise a catalytic subcomplex. Within the complex, the hexameric regulatory complex resides at the center, with the two heterodimeric catalytic subcomplexes bound on opposite sides.

The protein resides in the cytoplasm. It is found in the cytosol. Its activity is regulated as follows. Activated by the chemical integrated stress response (ISR) inhibitor ISRIB which stimulates guanine nucleotide exchange factor activity for both phosphorylated and unphosphorylated eIF2. Its function is as follows. Acts as a component of the translation initiation factor 2B (eIF2B) complex, which catalyzes the exchange of GDP for GTP on eukaryotic initiation factor 2 (eIF2) gamma subunit. Its guanine nucleotide exchange factor activity is repressed when bound to eIF2 complex phosphorylated on the alpha subunit, thereby limiting the amount of methionyl-initiator methionine tRNA available to the ribosome and consequently global translation is repressed. In Bos taurus (Bovine), this protein is Translation initiation factor eIF2B subunit alpha (EIF2B1).